The primary structure comprises 62 residues: Potassium channel toxin alpha-KTx 22.1 (62 aa).

An N-terminal signal peptide occupies residues 1 to 18; sequence MQKLFIVFVLFCILRLDA. 3 disulfides stabilise this stretch: C28/C46, C33/C59, and C37/C61.

This sequence belongs to the short scorpion toxin superfamily. Potassium channel inhibitor family. Alpha-KTx 22 subfamily. As to expression, expressed by the venom gland.

It is found in the secreted. Its function is as follows. May block potassium channels. The chain is Potassium channel toxin alpha-KTx 22.1 from Olivierus martensii (Manchurian scorpion).